The following is a 704-amino-acid chain: Probable serine/threonine-protein kinase WNK1 (704 aa).

Positions 27-284 (GRYNDVLGKG…ARELLKDPFL (258 aa)) constitute a Protein kinase domain. ATP is bound by residues 107–110 (TEMF) and Lys-157. Catalysis depends on Asp-174, which acts as the Proton acceptor. The segment at 499–521 (QTDLQDSGGSSDDGGGQTQHVKD) is disordered.

This sequence belongs to the protein kinase superfamily. Ser/Thr protein kinase family. WNK subfamily.

It carries out the reaction L-seryl-[protein] + ATP = O-phospho-L-seryl-[protein] + ADP + H(+). The catalysed reaction is L-threonyl-[protein] + ATP = O-phospho-L-threonyl-[protein] + ADP + H(+). This Oryza sativa subsp. japonica (Rice) protein is Probable serine/threonine-protein kinase WNK1 (WNK1).